The primary structure comprises 442 residues: F-box only protein 39 (442 aa).

The F-box domain occupies 16-61; it reads WAFLPDLCLCRVFWWLGDRDRSRAALVCRKWNQMMYSAELWRYRTI.

As to quaternary structure, directly interacts with SKP1 and CUL1.

Substrate-recognition component of the SCF (SKP1-CUL1-F-box protein)-type E3 ubiquitin ligase complex. The protein is F-box only protein 39 (FBXO39) of Homo sapiens (Human).